Consider the following 220-residue polypeptide: MAKPKSPSRRELLTNGVKAAGVTCLAGLALTAYVESASKAEAKALRPPGALPEDDFLAACVRCGLCVRACPYDTLRLAEMGEEAPLGTPFFVARETPCFMCTDVPCAKACPTGALDRDIPNIRKADMGVAVLVGHESCLNYKGITCSICHRVCPIRDEAITLEVQTIKGRRMVIPTVHSDKCTGCGTCEKHCVLGQAAIRVLPRELGLGGRGRNPAGRAV.

4Fe-4S ferredoxin-type domains lie at 50 to 80 (ALPE…LAEM) and 88 to 120 (TPFF…RDIP). [4Fe-4S] cluster-binding residues include C60, C63, C66, C70, C98, C101, C106, C110, C138, C146, C149, C153, C182, C185, C188, and C192. The region spanning 173–204 (VIPTVHSDKCTGCGTCEKHCVLGQAAIRVLPR) is the 4Fe-4S ferredoxin-type 3 domain.

The protein operates within one-carbon metabolism; methylamine degradation. Involved in electron transfer. The polypeptide is Methylamine utilization ferredoxin-type protein MauM (mauM) (Methylorubrum extorquens (strain ATCC 14718 / DSM 1338 / JCM 2805 / NCIMB 9133 / AM1) (Methylobacterium extorquens)).